The primary structure comprises 360 residues: DNA replication and repair protein RecF (360 aa).

An ATP-binding site is contributed by 33-40 (GENGSGKT).

Belongs to the RecF family.

It localises to the cytoplasm. Functionally, the RecF protein is involved in DNA metabolism; it is required for DNA replication and normal SOS inducibility. RecF binds preferentially to single-stranded, linear DNA. It also seems to bind ATP. This chain is DNA replication and repair protein RecF, found in Rickettsia typhi (strain ATCC VR-144 / Wilmington).